The following is a 91-amino-acid chain: Small ribosomal subunit protein bS6 (91 aa).

This sequence belongs to the bacterial ribosomal protein bS6 family.

Its function is as follows. Binds together with bS18 to 16S ribosomal RNA. The polypeptide is Small ribosomal subunit protein bS6 (Leptospira borgpetersenii serovar Hardjo-bovis (strain JB197)).